The primary structure comprises 223 residues: Neurotrophic factor BDNF precursor form (223 aa).

The first 5 residues, 1-5, serve as a signal peptide directing secretion; the sequence is SCMKA. Positions 6 to 114 are excised as a propeptide; sequence APMKEVSIRG…AANMSMRVRR (109 aa). Asparagine 107 carries an N-linked (GlcNAc...) asparagine glycan. 2 disulfides stabilise this stretch: cysteine 127–cysteine 194 and cysteine 172–cysteine 223.

It belongs to the NGF-beta family.

The protein resides in the secreted. Functionally, promotes the survival of neuronal populations that are all located either in the central nervous system or directly connected to it. In Charina bottae (Northern rubber boa), this protein is Neurotrophic factor BDNF precursor form (BDNF).